Consider the following 359-residue polypeptide: G-protein coupled receptor 15 (359 aa).

Residues 1 to 33 (MDPEETSVYLDYYYATSPNPDIRETHSHVPYTS) are Extracellular-facing. Residues 34–54 (VFLPVFYTAVFLTGVLGNLVL) form a helical membrane-spanning segment. The Cytoplasmic segment spans residues 55–69 (MGALHFKPGSRRLID). A helical membrane pass occupies residues 70–90 (IFIINLAASDFIFLVTLPLWV). Residues 91-120 (DKEASLGLWRTGSFLCKGSSYMISVNMHCS) are Extracellular-facing. Residues 121 to 141 (VFLLTCMSVDRYLAIVCPVVS) form a helical membrane-spanning segment. Topologically, residues 142–149 (RKFRRTDC) are cytoplasmic. The chain crosses the membrane as a helical span at residues 150-170 (AYVVCASIWFISCLLGLPTLL). The Extracellular portion of the chain corresponds to 171–192 (SRELTLIDDKPYCAEKKATPLK). A helical membrane pass occupies residues 193 to 213 (LIWSLVALIFTFFVPLLNIVT). At 214-239 (CYCCIARKLCAHYQQSGRHNKKLKKS) the chain is on the cytoplasmic side. Residues 240–260 (IKIILIVVAAFLVSWLPFNTF) form a helical membrane-spanning segment. Residues 261–283 (KLLAIVSGLQERYFPSAMLQLGM) lie on the Extracellular side of the membrane. A helical transmembrane segment spans residues 284–304 (EVSGPLAFANSCVNPFIYYIF). Residues 305 to 359 (DSYIRRAIVHCLCPCLKNYDFGSSTETSDSHLTKALSTFIHAEDFTRRRKRSVSL) are Cytoplasmic-facing. A Phosphoserine modification is found at serine 358.

Belongs to the G-protein coupled receptor 1 family. As to quaternary structure, interacts with adapter YWHAE; this interaction promotes ER-to-Golgi transport of GPR15. In terms of processing, phosphorylation is necessary for YWHAE binding and efficient surface expression. Post-translationally, O-glycosylated. Sialylated O-glycans in the N-terminal tail inhibits binding of GPR15LG. Sulfation is required for efficient binding of GPR15LG.

The protein localises to the cell membrane. Functionally, g protein-coupled receptor that plays an important role in immune homeostasis. Acts via its natural ligand GPR15LG, a chemokine-like polypeptide strongly expressed in gastrointestinal tissues. GPR15-GPR15LG signaling axis regulates intestinal homeostasis and inflammation through the migration of immune cells. Controls thereby the specific homing of T-cells, particularly FOXP3+ regulatory T-cells (Tregs), to the large intestine lamina propria. Also required for skin localization of thymus-derived dendritic epidermal T-cells. Plays an important role in mediating cytoprotective function as well as angiogenesis of thrombomodulin. Mechanistically, preferentially signals through the Gi/o pathway to inhibit adenylate cyclase activity and activate a phosphatidylinositol-calcium second messenger system that regulates the release of Ca(2+) ions from intracellular stores. The chain is G-protein coupled receptor 15 (GPR15) from Macaca fascicularis (Crab-eating macaque).